The chain runs to 2663 residues: Ankyrin repeat domain-containing protein 11 (2663 aa).

2 disordered regions span residues 1 to 90 (MPKG…KEPV) and 128 to 169 (SANS…ERGE). Composition is skewed to basic and acidic residues over residues 21–54 (MVEK…VRER) and 69–90 (EQKD…KEPV). A compositionally biased stretch (polar residues) spans 128–155 (SANSPVDTTPKHPSQSTVCQKGTPNSAS). A compositionally biased stretch (basic and acidic residues) spans 156-169 (KTKDKVNKRNERGE). 4 ANK repeats span residues 167-196 (RGET…DVNV), 200-229 (AGWT…EVNT), 233-262 (DDDT…NPQQ), and 266-292 (KGET…YTSS). Ser276 carries the phosphoserine modification. Disordered regions lie at residues 289–380 (YTSS…SNSF), 398–647 (APKK…GQCS), and 723–783 (DTNK…NDLK). The segment covering 295 to 305 (SSTESSEEEDA) has biased composition (acidic residues). The segment covering 309-320 (APSSSVDGNNTD) has biased composition (polar residues). Basic and acidic residues predominate over residues 356–376 (DRVPPVDDKHLLKKDYRKETK). Phosphoserine is present on Ser408. Thr410 is subject to Phosphothreonine. At Ser411 the chain carries Phosphoserine. A compositionally biased stretch (basic and acidic residues) spans 438–451 (KTREPSNAKQQKEK). The span at 452 to 462 (NKVKKKRKKET) shows a compositional bias: basic residues. Over residues 463–477 (KGREVRFGKRSDKFC) the composition is skewed to basic and acidic residues. Residues 481-493 (SESESSESGEDDR) show a composition bias toward acidic residues. The segment covering 513–531 (SLFSSLSASSTSSHGSSAA) has biased composition (low complexity). Residues 539 to 550 (TDQHTKHWRTDN) show a composition bias toward basic and acidic residues. The segment covering 551-562 (WKTISSPAWSEV) has biased composition (polar residues). The segment covering 576–588 (ESDYSSEGSSVES) has biased composition (low complexity). Basic residues-rich tracts occupy residues 591-602 (PVRKRQEHRKRA) and 629-641 (VKKH…HKNK). Ser834 is subject to Phosphoserine. Basic and acidic residues-rich tracts occupy residues 881–928 (VKED…EKHK), 935–1043 (SEKD…KSIL), 1059–1090 (KKDT…KEKA), and 1099–1112 (FSEK…KEKS). Disordered stretches follow at residues 881-1043 (VKED…KSIL) and 1059-1393 (KKDT…GQYE). Ser1079 carries the phosphoserine modification. A Phosphothreonine modification is found at Thr1120. A Phosphoserine modification is found at Ser1123. Composition is skewed to basic and acidic residues over residues 1142–1301 (DLPR…DKIS), 1330–1347 (GDDK…LKEK), and 1359–1393 (KSHD…GQYE). Thr1419 is modified (phosphothreonine). Composition is skewed to basic and acidic residues over residues 1424–1446 (STEK…KELK), 1466–1545 (REKW…KGDP), 1556–1574 (APSK…KLLG), 1587–1597 (LSQKDLEIEER), and 1605–1639 (MKQM…DIPA). The segment at 1424-1710 (STEKKDKNDS…TGVPTPTSVL (287 aa)) is disordered. A Phosphoserine modification is found at Ser1509. Ser1692 is subject to Phosphoserine. Residues 1698-1710 (SRPTGVPTPTSVL) show a composition bias toward polar residues. Position 1792 is a phosphoserine (Ser1792). Positions 1814-1836 (SVPAASSYDSPMPPSMEDRAPLP) are disordered. Residue Ser1847 is modified to Phosphoserine. Tyr1850 and Tyr1851 each carry phosphotyrosine. A phosphoserine mark is found at Ser1852, Ser1859, and Ser1990. Disordered stretches follow at residues 1988 to 2019 (PESP…PAPP) and 2131 to 2406 (LDLG…STQQ). 2 stretches are compositionally biased toward low complexity: residues 2310-2324 (IQPE…AEAP) and 2391-2406 (RSTQ…STQQ). The interval 2369 to 2663 (AKARGSEDDD…VNDDFVLLPA (295 aa)) is important for protein degradation.

Interacts with the PAS region of the p160 coactivators. In terms of processing, subject to proteasomal degradation which is probably essential to regulate its activity.

It is found in the nucleus. Functionally, chromatin regulator which modulates histone acetylation and gene expression in neural precursor cells. May recruit histone deacetylases (HDACs) to the p160 coactivators/nuclear receptor complex to inhibit ligand-dependent transactivation. Has a role in proliferation and development of cortical neural precursors. May also regulate bone homeostasis. The sequence is that of Ankyrin repeat domain-containing protein 11 (ANKRD11) from Homo sapiens (Human).